The primary structure comprises 514 residues: MIGRARPLMFLGTGSDVGKSVLAAAFCRILKQDGYSVAPFKAQNMALNSYITPEGGEMGRAQVVQAEAAGIEPHVDMNPVLLKPTSQMGSQVIVRGRAIGNYSAQEYYEYKKNLVEVVRESYERLAARYDVVVLEGAGSAVELNLKEHDLVNLAMAKMADAPCILVGDIDRGGIFAALLGSTMLMTPDERDRTIGFIVNKLRGDPRLFASGVDILESRSGLPVFGVVPHFDHIALPEEDSVALGRRARRVETRGSEDALMVGVVRLPYVSNYTDFDCLEHEPDVELLYFDRPEQVFGFDAVILPGSKNTIEDLAFLRKNGMAEAVVAFYKSGGTVVGLCGGYQMMGLRVSDPHGVESSIREIAGLGLLDMETEMFQDKVTSQVTALNIGGSGLEVSEDDALRGYEIHMGRSASMGGARPLFRIVSRDGLPVQVEDGLIQPGGRAWGTYIHGIFDNDGLRKAFLAGLKSRSGKTRVALSAGFSYQDWKNEQYDRLADHIRQHVDVKRIRRIIGLW.

Residues 258 to 458 (ALMVGVVRLP…IHGIFDNDGL (201 aa)) form the GATase cobBQ-type domain. C339 (nucleophile) is an active-site residue. The active site involves H450.

It belongs to the CobB/CobQ family. CobQ subfamily.

The protein operates within cofactor biosynthesis; adenosylcobalamin biosynthesis. Catalyzes amidations at positions B, D, E, and G on adenosylcobyrinic A,C-diamide. NH(2) groups are provided by glutamine, and one molecule of ATP is hydrogenolyzed for each amidation. The chain is Cobyric acid synthase from Syntrophobacter fumaroxidans (strain DSM 10017 / MPOB).